Reading from the N-terminus, the 259-residue chain is Ribonuclease PH (259 aa).

Phosphate-binding positions include arginine 88 and 126-128 (GTR).

Belongs to the RNase PH family. Homohexameric ring arranged as a trimer of dimers.

The enzyme catalyses tRNA(n+1) + phosphate = tRNA(n) + a ribonucleoside 5'-diphosphate. Phosphorolytic 3'-5' exoribonuclease that plays an important role in tRNA 3'-end maturation. Removes nucleotide residues following the 3'-CCA terminus of tRNAs; can also add nucleotides to the ends of RNA molecules by using nucleoside diphosphates as substrates, but this may not be physiologically important. Probably plays a role in initiation of 16S rRNA degradation (leading to ribosome degradation) during starvation. This Mycolicibacterium paratuberculosis (strain ATCC BAA-968 / K-10) (Mycobacterium paratuberculosis) protein is Ribonuclease PH.